We begin with the raw amino-acid sequence, 530 residues long: T-box transcription factor TBX21 (530 aa).

The disordered stretch occupies residues 1-55 (MGIVEPGCGDMLTGTEPMPSDEGRGPGADQQHRFFYPEPGAQDPTDRRAGSSLGT). The residue at position 52 (S52) is a Phosphoserine. Phosphothreonine is present on T55. Y76 and Y117 each carry phosphotyrosine. The T-box DNA-binding region spans 140–325 (LSNHLLWSKF…NNPFAKGFRE (186 aa)). Phosphotyrosine; by ABL1 is present on Y219. A Phosphoserine modification is found at S224. Y265 carries the phosphotyrosine; by ABL1 modification. T302 carries the phosphothreonine modification. Residue Y304 is modified to Phosphotyrosine; by ABL1. K313 is covalently cross-linked (Glycyl lysine isopeptide (Lys-Gly) (interchain with G-Cter in ubiquitin)). The interval 444-530 (AGWFRPMRTL…EGQFYNYFPN (87 aa)) is disordered. Residues 462-482 (SEEQGSSPSLWPEVTSLQPEP) show a composition bias toward polar residues. The span at 498–515 (SPYPSSGDSSSPAGAPSP) shows a compositional bias: low complexity. S508 is modified (phosphoserine). The residue at position 525 (Y525) is a Phosphotyrosine; by ITK.

Interacts with RUNX1 and RUNX3. Interacts with ITK. The phosphorylated form (at Tyr-525) interacts with GATA3. Interacts with ABL1. Interacts with RELA. The phosphorylated form (at Thr-302) interacts with NFATC2. Interacts with KDM6B. Interacts with SMARCA4 in a KDM6B-dependent manner. Interacts with CCTN1 and CDK9. Interacts with USP10. Post-translationally, phosphorylations at Ser-52, Tyr-76, Ser-224 and Ser-508 are regulated by mTORC1. Phosphorylation at Tyr-525 is essential for its interaction GATA3. Phosphorylation at Tyr-219, Tyr-265 and Tyr-304 enhances its transcriptional activator activity. Phosphorylation at Thr-302 is required for its interaction with NFATC2. Ubiquitinated at Lys-313, leading to its degradation by the proteasome. Ubiquitination is essential for controlling protein stability, binding to the T-box-binding element of the IFN-gamma promoter, and for interaction with NFATC2 through induction of phosphorylation at Thr-302. Deubiquitinated by USP10 leading to its stabilization. T-cell specific. Expressed in regulatory T (TReg) cells.

Its subcellular location is the nucleus. Its function is as follows. Lineage-defining transcription factor which initiates Th1 lineage development from naive Th precursor cells both by activating Th1 genetic programs and by repressing the opposing Th2 and Th17 genetic programs. Activates transcription of a set of genes important for Th1 cell function, including those encoding IFN-gamma and the chemokine receptor CXCR3. Activates IFNG and CXCR3 genes in part by recruiting chromatin remodeling complexes including KDM6B, a SMARCA4-containing SWI/SNF-complex, and an H3K4me2-methyltransferase complex to their promoters and all of these complexes serve to establish a more permissive chromatin state conducive with transcriptional activation. Can activate Th1 genes also via recruitment of Mediator complex and P-TEFb (composed of CDK9 and CCNT1/cyclin-T1) in the form of the super elongation complex (SEC) to super-enhancers and associated genes in activated Th1 cells. Inhibits the Th17 cell lineage commitment by blocking RUNX1-mediated transactivation of Th17 cell-specific transcriptinal regulator RORC. Inhibits the Th2 cell lineage commitment by suppressing the production of Th2 cytokines, such as IL-4, IL-5, and IL- 13, via repression of transcriptional regulators GATA3 and NFATC2. Protects Th1 cells from amplifying aberrant type-I IFN response in an IFN-gamma abundant microenvironment by acting as a repressor of type-I IFN transcription factors and type-I IFN- stimulated genes. Acts as a regulator of antiviral B-cell responses; controls chronic viral infection by promoting the antiviral antibody IgG2a isotype switching and via regulation of a broad antiviral gene expression program. The polypeptide is T-box transcription factor TBX21 (Tbx21) (Mus musculus (Mouse)).